Reading from the N-terminus, the 336-residue chain is MKTILAIETSCDETAVAIVNSDKQVLANEILSQVEHKKCGGVIPEIASRAHMKHLSGLIKSAMEKSNLNFCDLDAIAATSGPGLIGGLIIGTMMAKAIAHVTQKPFIAVNHLEAHALVVRLLYEVEFPFLVLLISGGHCQFLIAQDVGKYIKLGETLDDSLGEAFDKVAKTLGLSYPGGPLIEELAKKGDGMRFKLPRAMIKRSGCDLSFSGIKTAVKNLAREFVMSEQDVCDMCASFQECISDILLDRVRNAIGIAVSLNIKINDFVITGGVAANNFLKERLKKHIDLNVLSPPSNLCTDNAVMVGWTGIERLQRSYVDSLDFAPRPKWELEKYY.

H111 and H115 together coordinate Fe cation. Substrate is bound by residues 133–137 (LISGG), D166, G179, and N276. D301 lines the Fe cation pocket.

The protein belongs to the KAE1 / TsaD family. Requires Fe(2+) as cofactor.

The protein localises to the cytoplasm. It catalyses the reaction L-threonylcarbamoyladenylate + adenosine(37) in tRNA = N(6)-L-threonylcarbamoyladenosine(37) in tRNA + AMP + H(+). Its function is as follows. Required for the formation of a threonylcarbamoyl group on adenosine at position 37 (t(6)A37) in tRNAs that read codons beginning with adenine. Is involved in the transfer of the threonylcarbamoyl moiety of threonylcarbamoyl-AMP (TC-AMP) to the N6 group of A37, together with TsaE and TsaB. TsaD likely plays a direct catalytic role in this reaction. This is tRNA N6-adenosine threonylcarbamoyltransferase from Wolbachia pipientis subsp. Culex pipiens (strain wPip).